A 433-amino-acid polypeptide reads, in one-letter code: Enolase (433 aa).

Gln167 provides a ligand contact to (2R)-2-phosphoglycerate. The Proton donor role is filled by Glu209. Positions 246, 291, and 318 each coordinate Mg(2+). 4 residues coordinate (2R)-2-phosphoglycerate: Lys343, Arg372, Ser373, and Lys394. Lys343 functions as the Proton acceptor in the catalytic mechanism.

The protein belongs to the enolase family. As to quaternary structure, component of the RNA degradosome, a multiprotein complex involved in RNA processing and mRNA degradation. The cofactor is Mg(2+).

It is found in the cytoplasm. The protein resides in the secreted. It localises to the cell surface. The enzyme catalyses (2R)-2-phosphoglycerate = phosphoenolpyruvate + H2O. The protein operates within carbohydrate degradation; glycolysis; pyruvate from D-glyceraldehyde 3-phosphate: step 4/5. Its function is as follows. Catalyzes the reversible conversion of 2-phosphoglycerate (2-PG) into phosphoenolpyruvate (PEP). It is essential for the degradation of carbohydrates via glycolysis. This Haemophilus ducreyi (strain 35000HP / ATCC 700724) protein is Enolase.